We begin with the raw amino-acid sequence, 348 residues long: Mannonate dehydratase (348 aa).

Belongs to the mannonate dehydratase family. Fe(2+) serves as cofactor. Requires Mn(2+) as cofactor.

The catalysed reaction is D-mannonate = 2-dehydro-3-deoxy-D-gluconate + H2O. Its pathway is carbohydrate metabolism; pentose and glucuronate interconversion. Catalyzes the dehydration of D-mannonate. The protein is Mannonate dehydratase of Streptococcus uberis (strain ATCC BAA-854 / 0140J).